We begin with the raw amino-acid sequence, 563 residues long: Chitinase A (563 aa).

An N-terminal signal peptide occupies residues 1 to 23 (MRKFNKPLLALLIGSTLCSAAQA). A GH18 domain is found at 158 to 559 (KVVGSYFVEW…NSMNASLGNS (402 aa)). The active-site Proton donor is Glu-315.

Belongs to the glycosyl hydrolase 18 family. Chitinase class II subfamily.

It carries out the reaction Random endo-hydrolysis of N-acetyl-beta-D-glucosaminide (1-&gt;4)-beta-linkages in chitin and chitodextrins.. The polypeptide is Chitinase A (chiA) (Serratia marcescens).